The primary structure comprises 177 residues: ATP-dependent protease subunit HslV (177 aa).

Residue T2 is part of the active site. Positions 157, 160, and 163 each coordinate Na(+).

Belongs to the peptidase T1B family. HslV subfamily. As to quaternary structure, a double ring-shaped homohexamer of HslV is capped on each side by a ring-shaped HslU homohexamer. The assembly of the HslU/HslV complex is dependent on binding of ATP.

It is found in the cytoplasm. The catalysed reaction is ATP-dependent cleavage of peptide bonds with broad specificity.. Its activity is regulated as follows. Allosterically activated by HslU binding. Functionally, protease subunit of a proteasome-like degradation complex believed to be a general protein degrading machinery. The polypeptide is ATP-dependent protease subunit HslV (Aeromonas salmonicida (strain A449)).